The primary structure comprises 495 residues: Cobyric acid synthase (495 aa).

Residues 258-427 (GLRVAAVRLP…WHGLFDNDGF (170 aa)) form the GATase cobBQ-type domain. C339 (nucleophile) is an active-site residue. H419 is a catalytic residue.

This sequence belongs to the CobB/CobQ family. CobQ subfamily.

Its pathway is cofactor biosynthesis; adenosylcobalamin biosynthesis. In terms of biological role, catalyzes amidations at positions B, D, E, and G on adenosylcobyrinic A,C-diamide. NH(2) groups are provided by glutamine, and one molecule of ATP is hydrogenolyzed for each amidation. The sequence is that of Cobyric acid synthase from Mycobacterium sp. (strain KMS).